Reading from the N-terminus, the 327-residue chain is Ribosomal RNA large subunit methyltransferase F (327 aa).

Belongs to the methyltransferase superfamily. METTL16/RlmF family.

The protein resides in the cytoplasm. The catalysed reaction is adenosine(1618) in 23S rRNA + S-adenosyl-L-methionine = N(6)-methyladenosine(1618) in 23S rRNA + S-adenosyl-L-homocysteine + H(+). Specifically methylates the adenine in position 1618 of 23S rRNA. The protein is Ribosomal RNA large subunit methyltransferase F of Marinomonas sp. (strain MWYL1).